The sequence spans 471 residues: Nuclear distribution protein PAC1 (471 aa).

A LisH domain is found at 9-41 (QAEELHKSMIAYLLSVNLSKSAAALREELADSV). Positions 60–87 (TSVVRLQKKIMDLESRNAALQQELDSAT) form a coiled coil. Positions 83-93 (LDSATPTSLSR) are enriched in polar residues. The segment at 83–108 (LDSATPTSLSRRNQDPASWLPRAPAR) is disordered. WD repeat units lie at residues 113–154 (SHRG…RTIK), 156–196 (HTRA…KNIR), 200–247 (GHDH…CVKT), 250–289 (GHLDWVRDVFPSPDGRFLMSGGDDRVPRLLDASSGETKST), 292–352 (GHEH…IKTL), 354–393 (GHDNWIRALVFHPGGKYLLSVSDDKTLRCWDLSQECKCVR), 398–428 (AHGHFVSCIRWAPNIINESGLVSGEGGINGQ), and 429–467 (GTPSMNGVSISTTSKKEDTGGGGKIRCVIATGSVDMNVR). The tract at residues 424–449 (GINGQGTPSMNGVSISTTSKKEDTGG) is disordered. Residues 428-441 (QGTPSMNGVSISTT) show a composition bias toward polar residues.

Belongs to the WD repeat LIS1/nudF family. Self-associates. Interacts with NDL1 and dynein.

The protein localises to the cytoplasm. The protein resides in the cytoskeleton. Its subcellular location is the spindle pole. Functionally, positively regulates the activity of the minus-end directed microtubule motor protein dynein. May enhance dynein-mediated microtubule sliding by targeting dynein to the microtubule plus end. Required for nuclear migration during vegetative growth as well as development. Required for retrograde early endosome (EE) transport from the hyphal tip. Required for localization of dynein to the mitotic spindle poles. Recruits additional proteins to the dynein complex at SPBs. The chain is Nuclear distribution protein PAC1 from Coccidioides posadasii (strain C735) (Valley fever fungus).